Here is a 391-residue protein sequence, read N- to C-terminus: S-adenosylmethionine synthase 5 (391 aa).

A Mg(2+)-binding site is contributed by Glu9. Position 15 (His15) interacts with ATP. Residue Glu43 coordinates K(+). 2 residues coordinate L-methionine: Glu56 and Gln99. Residues 167 to 169 (DGK), 235 to 238 (SGRF), Asp246, 252 to 253 (RK), Ala269, Lys273, and Lys277 each bind ATP. Residue Asp246 coordinates L-methionine. Lys277 contacts L-methionine.

It belongs to the AdoMet synthase family. Homotetramer. Requires Mn(2+) as cofactor. The cofactor is Mg(2+). Co(2+) serves as cofactor. K(+) is required as a cofactor.

It localises to the cytoplasm. The enzyme catalyses L-methionine + ATP + H2O = S-adenosyl-L-methionine + phosphate + diphosphate. It functions in the pathway amino-acid biosynthesis; S-adenosyl-L-methionine biosynthesis; S-adenosyl-L-methionine from L-methionine: step 1/1. Functionally, catalyzes the formation of S-adenosylmethionine from methionine and ATP. The reaction comprises two steps that are both catalyzed by the same enzyme: formation of S-adenosylmethionine (AdoMet) and triphosphate, and subsequent hydrolysis of the triphosphate. The chain is S-adenosylmethionine synthase 5 (METK5) from Vitis vinifera (Grape).